Reading from the N-terminus, the 194-residue chain is Peptide deformylase (194 aa).

The interval 71–93 is disordered; that stretch reads DAEPEECGHDHGDGEGAHKHYPV. Basic and acidic residues predominate over residues 76–93; it reads ECGHDHGDGEGAHKHYPV. Fe cation contacts are provided by cysteine 119 and histidine 161. The active site involves glutamate 162. Histidine 165 contacts Fe cation.

The protein belongs to the polypeptide deformylase family. It depends on Fe(2+) as a cofactor.

The enzyme catalyses N-terminal N-formyl-L-methionyl-[peptide] + H2O = N-terminal L-methionyl-[peptide] + formate. Removes the formyl group from the N-terminal Met of newly synthesized proteins. Requires at least a dipeptide for an efficient rate of reaction. N-terminal L-methionine is a prerequisite for activity but the enzyme has broad specificity at other positions. The polypeptide is Peptide deformylase (Erythrobacter litoralis (strain HTCC2594)).